A 683-amino-acid polypeptide reads, in one-letter code: Cyclic nucleotide-gated channel alpha-1 (683 aa).

The Cytoplasmic segment spans residues Met-1–Leu-160. Residues Ala-34–Lys-144 form a disordered region. A compositionally biased stretch (basic and acidic residues) spans Ser-105–Lys-144. A helical transmembrane segment spans residues Phe-161–Glu-182. Residues Leu-183 to Leu-192 lie on the Extracellular side of the membrane. Residues Ile-193–Gly-213 traverse the membrane as a helical segment. The Cytoplasmic segment spans residues Tyr-214–Lys-238. Residues Leu-239 to Asn-257 traverse the membrane as a helical segment. The Extracellular segment spans residues Tyr-258–Arg-262. The helical transmembrane segment at Leu-263–Thr-281 threads the bilayer. Residues Arg-282 to Ile-288 are Cytoplasmic-facing. The tract at residues Pro-286–Met-394 is ion conduction pathway. A helical transmembrane segment spans residues Phe-289–Ile-312. Residues Ser-313 to Arg-335 are Extracellular-facing. Residue Asn-320 is glycosylated (N-linked (GlcNAc...) asparagine). 2 helical membrane-spanning segments follow: residues Leu-336–Val-370 and Val-371–Asn-395. The tract at residues Thr-353 to Glu-356 is selectivity filter. The interval Ala-396 to Ala-472 is C-linker. Topologically, residues Ala-396–Gly-683 are cytoplasmic. The cyclic nucleotide-binding domain stretch occupies residues Ala-476 to Lys-596. Residues Gly-536, Ser-539, Arg-552, and Thr-553 each contribute to the 3',5'-cyclic GMP site. Residues Arg-552 and Thr-553 each contribute to the 3',5'-cyclic AMP site. The stretch at Leu-614 to Leu-668 forms a coiled coil.

The protein belongs to the cyclic nucleotide-gated cation channel (TC 1.A.1.5) family. CNGA1 subfamily. Forms heterotetrameric channels composed of CNGA1 and CNGB1 subunits with 3:1 stoichiometry. May also form cyclic nucleotide-activated homotetrameric channels, that are efficiently activated by saturating cGMP, but poorly activated by saturating cAMP compared to the heterotetramer with CNGB1. The channel binds Ca(2+)-bound CALM1 via CaM1 and CaM2 regions of the CNGB1 subunit; this interaction modulates the affinity of the channel for cNMPs in response to intracellular Ca(2+) levels. In terms of tissue distribution, rod cells in the retina.

It localises to the cell membrane. The enzyme catalyses Ca(2+)(in) = Ca(2+)(out). The catalysed reaction is Na(+)(in) = Na(+)(out). It catalyses the reaction K(+)(in) = K(+)(out). It carries out the reaction NH4(+)(in) = NH4(+)(out). The enzyme catalyses Rb(+)(in) = Rb(+)(out). The catalysed reaction is Li(+)(in) = Li(+)(out). It catalyses the reaction Cs(+)(in) = Cs(+)(out). In terms of biological role, pore-forming subunit of the rod cyclic nucleotide-gated channel. Mediates rod photoresponses at dim light converting transient changes in intracellular cGMP levels into electrical signals. In the dark, cGMP levels are high and keep the channel open enabling a steady inward current carried by Na(+) and Ca(2+) ions that leads to membrane depolarization and neurotransmitter release from synaptic terminals. Upon photon absorption cGMP levels decline leading to channel closure and membrane hyperpolarization that ultimately slows neurotransmitter release and signals the presence of light, the end point of the phototransduction cascade. Conducts cGMP- and cAMP-gated ion currents, with permeability for monovalent and divalent cations. The selectivity for Ca(2+) over Na(+) increases with cGMP concentrations, whereas the selectivity among monovalent ions is independent of the cGMP levels. The polypeptide is Cyclic nucleotide-gated channel alpha-1 (Rattus norvegicus (Rat)).